The primary structure comprises 1280 residues: Clustered mitochondria protein homolog (1280 aa).

Over residues 1–27 (MAASSNDASKSAMANSNVTTEVAQTPS) the composition is skewed to polar residues. 2 disordered regions span residues 1–49 (MAAS…GQLP) and 169–189 (GLDQ…LADY). The span at 32 to 43 (VNGEVEATEEDG) shows a compositional bias: acidic residues. In terms of domain architecture, Clu spans 338–582 (DLARTQESYL…RLTPLDVAWI (245 aa)). 3 disordered regions span residues 633 to 669 (KANK…EPEQ), 905 to 943 (GAAV…AVSL), and 1214 to 1280 (TGRN…TQKP). Residues 635–648 (NKARGGRRRLPKAQ) are compositionally biased toward basic residues. The segment covering 649 to 669 (KKADAGKEVDGEKKAEAEPEQ) has biased composition (basic and acidic residues). The segment covering 1221–1235 (PAAATPSVSDAAAAA) has biased composition (low complexity). Over residues 1245–1261 (VDQRKIEDLLKYIEGES) the composition is skewed to basic and acidic residues. Positions 1265–1280 (PTKKRTQNPRKRTQKP) are enriched in basic residues.

This sequence belongs to the CLU family. May associate with the eukaryotic translation initiation factor 3 (eIF-3) complex.

Its subcellular location is the cytoplasm. Functionally, mRNA-binding protein involved in proper cytoplasmic distribution of mitochondria. The protein is Clustered mitochondria protein homolog of Phaeosphaeria nodorum (strain SN15 / ATCC MYA-4574 / FGSC 10173) (Glume blotch fungus).